The following is a 201-amino-acid chain: Potassium-transporting ATPase KdpC subunit (201 aa).

A helical membrane pass occupies residues valine 10–isoleucine 30. Residues histidine 67–alanine 105 are disordered. The segment covering proline 70–threonine 82 has biased composition (low complexity). Polar residues predominate over residues lysine 83–alanine 105.

Belongs to the KdpC family. As to quaternary structure, the system is composed of three essential subunits: KdpA, KdpB and KdpC.

It localises to the cell inner membrane. Its function is as follows. Part of the high-affinity ATP-driven potassium transport (or Kdp) system, which catalyzes the hydrolysis of ATP coupled with the electrogenic transport of potassium into the cytoplasm. This subunit acts as a catalytic chaperone that increases the ATP-binding affinity of the ATP-hydrolyzing subunit KdpB by the formation of a transient KdpB/KdpC/ATP ternary complex. In Rhodopseudomonas palustris (strain BisB5), this protein is Potassium-transporting ATPase KdpC subunit.